We begin with the raw amino-acid sequence, 635 residues long: Interferon-induced GTP-binding protein Mx2 (635 aa).

In terms of domain architecture, Dynamin-type G spans 31–304 (DLALPAIAVI…LVQHIEKSMP (274 aa)). The G1 motif stretch occupies residues 41–48 (GDQSSGKS). 41-48 (GDQSSGKS) is a binding site for GTP. Residues 66–68 (VTR) form a G2 motif region. The interval 142 to 145 (DLPG) is G3 motif. Residues 142–146 (DLPGI) and 211–214 (TKPD) each bind GTP. A G4 motif region spans residues 211-214 (TKPD). Positions 243–246 (KCRG) are G5 motif. Residues 549–635 (LREMMLHLKS…MKAHNYLVEF (87 aa)) form the GED domain.

Belongs to the TRAFAC class dynamin-like GTPase superfamily. Dynamin/Fzo/YdjA family.

Its subcellular location is the nucleus. It is found in the cytoplasm. Functionally, does not inhibit strain RB-1 of the fish pathogen, infectious hematopoietic necrosis virus (IHNV). The protein is Interferon-induced GTP-binding protein Mx2 of Oncorhynchus mykiss (Rainbow trout).